Reading from the N-terminus, the 360-residue chain is Carbamoyl phosphate synthase small chain (360 aa).

The segment at 1–169 is CPSase; the sequence is MTKRLLILED…TKTAYPAPGI (169 aa). The L-glutamine site is built by serine 46, glycine 220, and glycine 222. Residues 172 to 358 enclose the Glutamine amidotransferase type-1 domain; that stretch reads NIVLVDFGLK…LEMIDSWRCT (187 aa). Cysteine 247 functions as the Nucleophile in the catalytic mechanism. Residues methionine 248, glutamine 251, asparagine 289, glycine 291, and tyrosine 292 each contribute to the L-glutamine site. Catalysis depends on residues histidine 331 and aspartate 333.

Belongs to the CarA family. In terms of assembly, composed of two chains; the small (or glutamine) chain promotes the hydrolysis of glutamine to ammonia, which is used by the large (or ammonia) chain to synthesize carbamoyl phosphate. Tetramer of heterodimers (alpha,beta)4.

It carries out the reaction hydrogencarbonate + L-glutamine + 2 ATP + H2O = carbamoyl phosphate + L-glutamate + 2 ADP + phosphate + 2 H(+). The enzyme catalyses L-glutamine + H2O = L-glutamate + NH4(+). The protein operates within amino-acid biosynthesis; L-arginine biosynthesis; carbamoyl phosphate from bicarbonate: step 1/1. It functions in the pathway pyrimidine metabolism; UMP biosynthesis via de novo pathway; (S)-dihydroorotate from bicarbonate: step 1/3. Its function is as follows. Small subunit of the glutamine-dependent carbamoyl phosphate synthetase (CPSase). CPSase catalyzes the formation of carbamoyl phosphate from the ammonia moiety of glutamine, carbonate, and phosphate donated by ATP, constituting the first step of 2 biosynthetic pathways, one leading to arginine and/or urea and the other to pyrimidine nucleotides. The small subunit (glutamine amidotransferase) binds and cleaves glutamine to supply the large subunit with the substrate ammonia. In Streptococcus pyogenes serotype M18 (strain MGAS8232), this protein is Carbamoyl phosphate synthase small chain.